The sequence spans 443 residues: Probable D-serine dehydratase (443 aa).

The residue at position 118 (lysine 118) is an N6-(pyridoxal phosphate)lysine.

Belongs to the serine/threonine dehydratase family. DsdA subfamily. Requires pyridoxal 5'-phosphate as cofactor.

The catalysed reaction is D-serine = pyruvate + NH4(+). This chain is Probable D-serine dehydratase, found in Colwellia psychrerythraea (strain 34H / ATCC BAA-681) (Vibrio psychroerythus).